A 307-amino-acid polypeptide reads, in one-letter code: Ubiquitin recognition factor in ER-associated degradation protein 1 (307 aa).

Met1 is subject to N-acetylmethionine. A phosphoserine mark is found at Ser129, Ser231, Ser245, Ser247, and Ser299. Disordered regions lie at residues Gly230 to Lys255 and Gly288 to Pro307.

Belongs to the UFD1 family. Heterodimer with NPLOC4, this heterodimer binds VCP and inhibits Golgi membrane fusion. Interacts with USP13. Interacts with ZFAND2B; probably through VCP.

It is found in the nucleus. Its subcellular location is the cytoplasm. It localises to the cytosol. It participates in protein degradation; proteasomal ubiquitin-dependent pathway. Essential component of the ubiquitin-dependent proteolytic pathway which degrades ubiquitin fusion proteins. The ternary complex containing UFD1, VCP and NPLOC4 binds ubiquitinated proteins and is necessary for the export of misfolded proteins from the ER to the cytoplasm, where they are degraded by the proteasome. The NPLOC4-UFD1-VCP complex regulates spindle disassembly at the end of mitosis and is necessary for the formation of a closed nuclear envelope. It may be involved in the development of some ectoderm-derived structures. Acts as a negative regulator of type I interferon production via the complex formed with VCP and NPLOC4, which binds to RIGI and recruits RNF125 to promote ubiquitination and degradation of RIGI. This Mus musculus (Mouse) protein is Ubiquitin recognition factor in ER-associated degradation protein 1.